The primary structure comprises 638 residues: Exotoxin A (638 aa).

An N-terminal signal peptide occupies residues 1–25 (MHLTPHWIPLVASLGLLAGGSFASA). Residues 26–277 (AEEAFDLWNE…VISHRLHFPE (252 aa)) are domain Ia (required for target cell recognition). The segment at 278 to 389 (GGSLAALTAH…TGNDEAGAAS (112 aa)) is II (required for translocation in target cell cytoplasm). Cys-290 and Cys-312 are joined by a disulfide. Residues 390–429 (ADVVSLTCPVAAGECAGPADSGDALLERNYPTGAEFLGDG) are domain Ib. Residues 430–638 (GDISFSTRGT…PGKPPREDLK (209 aa)) are III (required for ADP-ribosyl activity). Residues 465 to 467 (HGT), Ser-474, 479 to 485 (GVRARSQ), and Glu-578 each bind NAD(+). Glu-578 is an active-site residue. Residues 596 to 638 (IPTDPRNVGGDLDPSSIPDKEQAISALPDYASQPGKPPREDLK) form a disordered region.

Post-translationally, the 8 cysteines participate in intrachain disulfide bonds.

It carries out the reaction diphthamide-[translation elongation factor 2] + NAD(+) = N-(ADP-D-ribosyl)diphthamide-[translation elongation factor 2] + nicotinamide + H(+). Its activity is regulated as follows. Inhibited by 1,8-naphthalimide (NAP) as well as a number of poly(ADP-ribose) polymerase inhibitors and other compounds. In terms of biological role, an NAD-dependent ADP-ribosyltransferase (ADPRT). Catalyzes the transfer of the ADP ribosyl moiety of oxidized NAD (NAD(+)) onto eukaryotic elongation factor 2 (eEF-2) thus arresting protein synthesis. Has an LD(50) of 65 ng/ml against the human lung epithelial cell line C38. This Pseudomonas aeruginosa (strain ATCC 15692 / DSM 22644 / CIP 104116 / JCM 14847 / LMG 12228 / 1C / PRS 101 / PAO1) protein is Exotoxin A.